The following is a 671-amino-acid chain: DNA ligase (671 aa).

NAD(+) contacts are provided by residues 32–36 (DAEYD), 81–82 (SL), and E113. K115 (N6-AMP-lysine intermediate) is an active-site residue. Residues R136, E173, K290, and K314 each coordinate NAD(+). Residues C408, C411, C426, and C432 each coordinate Zn(2+). In terms of domain architecture, BRCT spans 593-671 (EIDSPFAGKT…EAEMLRLLGS (79 aa)).

The protein belongs to the NAD-dependent DNA ligase family. LigA subfamily. Mg(2+) serves as cofactor. It depends on Mn(2+) as a cofactor.

It carries out the reaction NAD(+) + (deoxyribonucleotide)n-3'-hydroxyl + 5'-phospho-(deoxyribonucleotide)m = (deoxyribonucleotide)n+m + AMP + beta-nicotinamide D-nucleotide.. In terms of biological role, DNA ligase that catalyzes the formation of phosphodiester linkages between 5'-phosphoryl and 3'-hydroxyl groups in double-stranded DNA using NAD as a coenzyme and as the energy source for the reaction. It is essential for DNA replication and repair of damaged DNA. This Escherichia coli O7:K1 (strain IAI39 / ExPEC) protein is DNA ligase.